The primary structure comprises 468 residues: Glutamine synthetase (468 aa).

Residues 13 to 97 form the GS beta-grasp domain; that stretch reads NEVKFVDLRF…IRCDILEPAT (85 aa). The GS catalytic domain maps to 105–468; the sequence is PRSIAKRAED…PVEFELYYSV (364 aa). 2 residues coordinate Mg(2+): E130 and E132. ATP is bound at residue E208. E213 and E220 together coordinate Mg(2+). L-glutamate contacts are provided by residues 264-265 and G265; that span reads NG. H269 contributes to the Mg(2+) binding site. ATP contacts are provided by residues 271-273 and S273; that span reads HQS. R321, E327, and R339 together coordinate L-glutamate. ATP is bound by residues R339, R344, and K352. E357 provides a ligand contact to Mg(2+). Position 359 (R359) interacts with L-glutamate. At Y397 the chain carries O-AMP-tyrosine.

Belongs to the glutamine synthetase family. As to quaternary structure, oligomer of 12 subunits arranged in the form of two hexameric ring. The cofactor is Mg(2+).

The protein resides in the cytoplasm. It catalyses the reaction L-glutamate + NH4(+) + ATP = L-glutamine + ADP + phosphate + H(+). Its activity is regulated as follows. The activity of this enzyme could be controlled by adenylation under conditions of abundant glutamine. Functionally, catalyzes the ATP-dependent biosynthesis of glutamine from glutamate and ammonia. This chain is Glutamine synthetase, found in Vibrio alginolyticus.